The following is a 124-amino-acid chain: Small ribosomal subunit protein uS12 (124 aa).

At D89 the chain carries 3-methylthioaspartic acid.

The protein belongs to the universal ribosomal protein uS12 family. Part of the 30S ribosomal subunit. Contacts proteins S8 and S17. May interact with IF1 in the 30S initiation complex.

With S4 and S5 plays an important role in translational accuracy. In terms of biological role, interacts with and stabilizes bases of the 16S rRNA that are involved in tRNA selection in the A site and with the mRNA backbone. Located at the interface of the 30S and 50S subunits, it traverses the body of the 30S subunit contacting proteins on the other side and probably holding the rRNA structure together. The combined cluster of proteins S8, S12 and S17 appears to hold together the shoulder and platform of the 30S subunit. This is Small ribosomal subunit protein uS12 from Prochlorococcus marinus (strain SARG / CCMP1375 / SS120).